The primary structure comprises 357 residues: Acyl-coenzyme A diphosphatase NUDT19 (357 aa).

Residues 10–242 (AATVMLAAGW…IWLAPPQFYE (233 aa)) form the Nudix hydrolase domain. Positions 72–93 (PRFGLGPEPPRQPPFPGLSHGD) are disordered. A compositionally biased stretch (pro residues) spans 78 to 87 (PEPPRQPPFP). The short motif at 97–118 (AALPDDVALRICAIREAFEEAG) is the Nudix box element. The Mg(2+) site is built by glutamate 112 and glutamate 116. Position 300 is an N6-succinyllysine (lysine 300). A Microbody targeting signal motif is present at residues 355 to 357 (AHL).

This sequence belongs to the Nudix hydrolase family. In terms of assembly, monomer. The cofactor is Mg(2+). Mn(2+) serves as cofactor. Highly expressed in the kidneys, with lower levels in skeletal muscle and brain (at protein level).

It localises to the peroxisome. The enzyme catalyses an acyl-CoA + H2O = an acyl-4'-phosphopantetheine + adenosine 3',5'-bisphosphate + 2 H(+). It carries out the reaction CoA + H2O = (R)-4'-phosphopantetheine + adenosine 3',5'-bisphosphate + 2 H(+). It catalyses the reaction hexanoyl-CoA + H2O = hexanoyl-4'-phosphopantetheine + adenosine 3',5'-bisphosphate + 2 H(+). The catalysed reaction is octanoyl-CoA + H2O = S-octanoyl-4'-phosphopantetheine + adenosine 3',5'-bisphosphate + 2 H(+). The enzyme catalyses butanoyl-CoA + H2O = S-butanoyl-4'-phosphopantetheine + adenosine 3',5'-bisphosphate + 2 H(+). It carries out the reaction propanoyl-CoA + H2O = propanoyl-4'-phosphopantetheine + adenosine 3',5'-bisphosphate + 2 H(+). It catalyses the reaction malonyl-CoA + H2O = malonyl-4'-phosphopantetheine + adenosine 3',5'-bisphosphate + 2 H(+). The catalysed reaction is succinyl-CoA + H2O = succinyl-4'-phosphopantetheine + adenosine 3',5'-bisphosphate + 2 H(+). The enzyme catalyses choloyl-CoA + H2O = S-choloyl-4'-phosphopantetheine + adenosine 3',5'-bisphosphate + 2 H(+). It carries out the reaction 4,8-dimethylnonanoyl-CoA + H2O = S-(4,8-dimethylnonanoyl)-4'-phosphopantetheine + adenosine 3',5'-bisphosphate + 2 H(+). It catalyses the reaction (9Z,12Z,15Z)-octadecatrienoyl-CoA + H2O = S-(9Z,12Z,15Z-octadecatrienoyl)-4'-phosphopantetheine + adenosine 3',5'-bisphosphate + 2 H(+). The catalysed reaction is (9Z,12Z)-octadecadienoyl-CoA + H2O = S-(9Z,12Z-octadecadienoyl)-4'-phosphopantetheine + adenosine 3',5'-bisphosphate + 2 H(+). The enzyme catalyses (9Z)-hexadecenoyl-CoA + H2O = S-(9Z-hexadecenoyl)-4'-phosphopantetheine + adenosine 3',5'-bisphosphate + 2 H(+). It carries out the reaction (9Z)-tetradecenoyl-CoA + H2O = S-(9Z-tetradecenoyl)-4'-phosphopantetheine + adenosine 3',5'-bisphosphate + 2 H(+). It catalyses the reaction (6Z)-octenoyl-CoA + H2O = S-(6Z-octenoyl)-4'-phosphopantetheine + adenosine 3',5'-bisphosphate + 2 H(+). The catalysed reaction is hexadecanoyl-CoA + H2O = S-hexadecanoyl-4'-phosphopantetheine + adenosine 3',5'-bisphosphate + 2 H(+). The enzyme catalyses tetradecanoyl-CoA + H2O = tetradecanoyl-4'-phosphopantetheine + adenosine 3',5'-bisphosphate + 2 H(+). It carries out the reaction dodecanoyl-CoA + H2O = S-dodecanoyl-4'-phosphopantetheine + adenosine 3',5'-bisphosphate + 2 H(+). It catalyses the reaction a 5'-end CoA-ribonucleoside in mRNA + H2O = a 5'-end phospho-adenosine-phospho-ribonucleoside in mRNA + (R)-4'-phosphopantetheine + 2 H(+). Inhibited by chenodeoxycholic acid (CDCA) and its conjugated derivatives, taurochenodeoxycholic acid and glycochenodeoxycholic acid. Inhibited by fluoride. Its function is as follows. Fatty acyl-coenzyme A (CoA) diphosphatase that hydrolyzes fatty acyl-CoA to yield acyl-4'-phosphopantetheine and adenosine 3',5'-bisphosphate. Mediates the hydrolysis of a wide range of CoA esters, including choloyl-CoA and branched-chain fatty-acyl-CoA esters and at low substrate concentrations medium and long-chain fatty-acyl-CoA esters are the primary substrates. Highest activity seen with medium-chain acyl-CoA esters and higher rates of activity seen with the unsaturated acyl-CoA esters compared with the saturated esters. Exhibits decapping activity towards dpCoA-capped RNAs in vitro. The sequence is that of Acyl-coenzyme A diphosphatase NUDT19 (Nudt19) from Mus musculus (Mouse).